A 501-amino-acid chain; its full sequence is Ribulose bisphosphate carboxylase large chain (501 aa).

Positions 141 and 191 each coordinate substrate. Catalysis depends on K193, which acts as the Proton acceptor. K195 is a substrate binding site. Positions 219, 221, and 222 each coordinate Mg(2+). K219 carries the N6-carboxylysine modification. The Proton acceptor role is filled by H311. Substrate is bound by residues R312, H344, and S396.

The protein belongs to the RuBisCO large chain family. Type I subfamily. As to quaternary structure, heterohexadecamer of 8 large chains and 8 small chains. Requires Mg(2+) as cofactor.

It catalyses the reaction 2 (2R)-3-phosphoglycerate + 2 H(+) = D-ribulose 1,5-bisphosphate + CO2 + H2O. The catalysed reaction is D-ribulose 1,5-bisphosphate + O2 = 2-phosphoglycolate + (2R)-3-phosphoglycerate + 2 H(+). In terms of biological role, ruBisCO catalyzes two reactions: the carboxylation of D-ribulose 1,5-bisphosphate, the primary event in carbon dioxide fixation, as well as the oxidative fragmentation of the pentose substrate. Both reactions occur simultaneously and in competition at the same active site. The chain is Ribulose bisphosphate carboxylase large chain from Paraburkholderia phymatum (strain DSM 17167 / CIP 108236 / LMG 21445 / STM815) (Burkholderia phymatum).